We begin with the raw amino-acid sequence, 386 residues long: Cytoplasmic 60S subunit biogenesis factor ZNF622 (386 aa).

Ala2 is subject to N-acetylalanine. 2 U1-type zinc fingers span residues 4–28 (YTCI…TDWH) and 67–91 (TYCT…SRRH). The interval 135 to 237 (AIKAQPSTSP…AEDAEAEESP (103 aa)) is disordered. Residues 165-176 (GTPERDPTEKPP) show a composition bias toward basic and acidic residues. Positions 194-235 (EESEEEGEEDDEDWEDIDSDDGLECENPGVEEEDAEDAEAEE) are enriched in acidic residues. Phosphoserine is present on Ser269.

Belongs to the REI1 family. In terms of assembly, homo- and heterodimer. Associates with pre-60S ribosomal particles. Interacts with MELK and MYBL2. Interacts with DNAJC21. Phosphorylated by MELK. The phosphorylation may redirect the protein to the nucleus. In terms of processing, ubiquitinated by HECTD1, leading to its degradation.

Its subcellular location is the cytoplasm. The protein resides in the nucleus. In terms of biological role, pre-60S-associated cytoplasmic factor involved in the cytoplasmic maturation of the 60S subunit. The protein is Cytoplasmic 60S subunit biogenesis factor ZNF622 (Znf622) of Rattus norvegicus (Rat).